Reading from the N-terminus, the 1616-residue chain is S-layer-related protein (1616 aa).

The first 30 residues, 1-30, serve as a signal peptide directing secretion; that stretch reads MKSLLRKWNGMMIIALVISLLTPAWGKASA. The BIG2 domain occupies 1115 to 1185; it reads VKALKLDRGT…GSGTVQATYE (71 aa). 4 disordered regions span residues 1191 to 1244, 1372 to 1455, 1523 to 1554, and 1585 to 1616; these read ARVS…DGRN, NKRN…GRAR, ARGR…REAG, and FAGG…ARPC. The span at 1199–1225 shows a compositional bias: gly residues; that stretch reads STGGGSDTGSGTGSGSGGGSAGGGGTA. Positions 1372–1387 are enriched in basic residues; the sequence is NKRNRRLRKLRPKNRK. The span at 1406–1416 shows a compositional bias: low complexity; sequence PPECSASCPPA. The region spanning 1438–1502 is the SLH domain; it reads WSPPRSASPT…ALDPAPAAAD (65 aa). Over residues 1536–1554 the composition is skewed to basic and acidic residues; sequence RGADTRTDERDAHARREAG. A compositionally biased stretch (basic residues) spans 1594–1616; that stretch reads GRTRGRTLRARPARLPVRKARPC.

The protein localises to the secreted. Its subcellular location is the cell wall. It localises to the S-layer. In terms of biological role, the S-layer is a paracrystalline mono-layered assembly of proteins which coats the surface of bacteria. May play a role in the export of butirosin from the organism. This Niallia circulans (Bacillus circulans) protein is S-layer-related protein (butB).